The chain runs to 253 residues: tRNA pseudouridine synthase A (253 aa).

The active-site Nucleophile is Asp53. Tyr112 provides a ligand contact to substrate.

It belongs to the tRNA pseudouridine synthase TruA family. Homodimer.

The enzyme catalyses uridine(38/39/40) in tRNA = pseudouridine(38/39/40) in tRNA. In terms of biological role, formation of pseudouridine at positions 38, 39 and 40 in the anticodon stem and loop of transfer RNAs. This Lactococcus lactis subsp. lactis (strain IL1403) (Streptococcus lactis) protein is tRNA pseudouridine synthase A.